The primary structure comprises 892 residues: Translation initiation factor IF-2 (892 aa).

A disordered region spans residues 88–305 (KKRTFVKRDP…SLQQGFQKPA (218 aa)). Composition is skewed to basic and acidic residues over residues 93–159 (VKRD…KDKV) and 166–216 (DMTK…EENK). Over residues 254–269 (GRGRNAKAARPAKKGK) the composition is skewed to basic residues. Over residues 270–282 (HAESKADREEARA) the composition is skewed to basic and acidic residues. In terms of domain architecture, tr-type G spans 391 to 560 (PRAPVVTIMG…LLQAEVLELK (170 aa)). The interval 400–407 (GHVDHGKT) is G1. 400–407 (GHVDHGKT) lines the GTP pocket. A G2 region spans residues 425–429 (GITQH). Positions 446–449 (DTPG) are G3. Residues 446–450 (DTPGH) and 500–503 (NKID) contribute to the GTP site. The G4 stretch occupies residues 500–503 (NKID). The G5 stretch occupies residues 536 to 538 (SAK).

This sequence belongs to the TRAFAC class translation factor GTPase superfamily. Classic translation factor GTPase family. IF-2 subfamily.

The protein resides in the cytoplasm. Its function is as follows. One of the essential components for the initiation of protein synthesis. Protects formylmethionyl-tRNA from spontaneous hydrolysis and promotes its binding to the 30S ribosomal subunits. Also involved in the hydrolysis of GTP during the formation of the 70S ribosomal complex. This Salmonella paratyphi A (strain ATCC 9150 / SARB42) protein is Translation initiation factor IF-2.